Here is a 469-residue protein sequence, read N- to C-terminus: Glutamate--tRNA ligase 1 (469 aa).

Positions 10-20 match the 'HIGH' region motif; the sequence is PSPTGYLHIGG. Zn(2+) is bound by residues cysteine 99, cysteine 101, cysteine 126, and aspartate 128. The 'KMSKS' region motif lies at 237–241; sequence RLSKR. Position 240 (lysine 240) interacts with ATP.

It belongs to the class-I aminoacyl-tRNA synthetase family. Glutamate--tRNA ligase type 1 subfamily. In terms of assembly, monomer. Zn(2+) serves as cofactor.

The protein resides in the cytoplasm. It carries out the reaction tRNA(Glu) + L-glutamate + ATP = L-glutamyl-tRNA(Glu) + AMP + diphosphate. Functionally, catalyzes the attachment of glutamate to tRNA(Glu) in a two-step reaction: glutamate is first activated by ATP to form Glu-AMP and then transferred to the acceptor end of tRNA(Glu). This chain is Glutamate--tRNA ligase 1, found in Coxiella burnetii (strain RSA 331 / Henzerling II).